We begin with the raw amino-acid sequence, 229 residues long: Large ribosomal subunit protein uL1 (229 aa).

This sequence belongs to the universal ribosomal protein uL1 family. Part of the 50S ribosomal subunit.

In terms of biological role, binds directly to 23S rRNA. The L1 stalk is quite mobile in the ribosome, and is involved in E site tRNA release. Functionally, protein L1 is also a translational repressor protein, it controls the translation of the L11 operon by binding to its mRNA. The polypeptide is Large ribosomal subunit protein uL1 (Gemmatimonas aurantiaca (strain DSM 14586 / JCM 11422 / NBRC 100505 / T-27)).